Here is a 456-residue protein sequence, read N- to C-terminus: L-2-hydroxyglutarate dehydrogenase, mitochondrial (456 aa).

A mitochondrion-targeting transit peptide spans 1–20; that stretch reads MLKTSFLLSKRNAVSLSRVL.

The protein belongs to the L2HGDH family. Requires FAD as cofactor.

The protein localises to the mitochondrion. The enzyme catalyses (S)-2-hydroxyglutarate + A = 2-oxoglutarate + AH2. In Nematostella vectensis (Starlet sea anemone), this protein is L-2-hydroxyglutarate dehydrogenase, mitochondrial.